The following is a 331-amino-acid chain: Probable allantoicase (331 aa).

This sequence belongs to the allantoicase family.

It carries out the reaction allantoate + H2O = (S)-ureidoglycolate + urea. The protein operates within nitrogen metabolism; (S)-allantoin degradation; (S)-ureidoglycolate from allantoate (aminidohydrolase route): step 1/1. The chain is Probable allantoicase from Stutzerimonas stutzeri (strain A1501) (Pseudomonas stutzeri).